Consider the following 344-residue polypeptide: Dihydroorotate dehydrogenase (quinone) (344 aa).

FMN-binding positions include 64-68 (AGLDK) and threonine 88. Substrate is bound at residue lysine 68. 113–117 (NRMGF) lines the substrate pocket. FMN is bound by residues asparagine 144 and asparagine 177. Asparagine 177 is a binding site for substrate. Serine 180 serves as the catalytic Nucleophile. Asparagine 182 provides a ligand contact to substrate. FMN is bound by residues lysine 222 and threonine 250. 251 to 252 (NT) lines the substrate pocket. Residues glycine 273, glycine 302, and 323–324 (YS) each bind FMN.

It belongs to the dihydroorotate dehydrogenase family. Type 2 subfamily. In terms of assembly, monomer. FMN serves as cofactor.

The protein localises to the cell membrane. It carries out the reaction (S)-dihydroorotate + a quinone = orotate + a quinol. The protein operates within pyrimidine metabolism; UMP biosynthesis via de novo pathway; orotate from (S)-dihydroorotate (quinone route): step 1/1. Catalyzes the conversion of dihydroorotate to orotate with quinone as electron acceptor. This is Dihydroorotate dehydrogenase (quinone) from Polynucleobacter necessarius subsp. necessarius (strain STIR1).